The primary structure comprises 140 residues: Nucleoside diphosphate kinase (140 aa).

ATP is bound by residues Lys-11, Phe-59, Arg-87, Thr-93, Arg-104, and Asn-114. His-117 (pros-phosphohistidine intermediate) is an active-site residue.

This sequence belongs to the NDK family. In terms of assembly, homotetramer. It depends on Mg(2+) as a cofactor.

Its subcellular location is the cytoplasm. It carries out the reaction a 2'-deoxyribonucleoside 5'-diphosphate + ATP = a 2'-deoxyribonucleoside 5'-triphosphate + ADP. The enzyme catalyses a ribonucleoside 5'-diphosphate + ATP = a ribonucleoside 5'-triphosphate + ADP. In terms of biological role, major role in the synthesis of nucleoside triphosphates other than ATP. The ATP gamma phosphate is transferred to the NDP beta phosphate via a ping-pong mechanism, using a phosphorylated active-site intermediate. This chain is Nucleoside diphosphate kinase, found in Francisella tularensis subsp. tularensis (strain SCHU S4 / Schu 4).